Here is a 660-residue protein sequence, read N- to C-terminus: Iron(3+)-hydroxamate import system permease protein FhuB (660 aa).

18 consecutive transmembrane segments (helical) span residues 5–25 (IALF…ALTW), 62–82 (LAIS…FQQV), 93–113 (LGVA…AIPG), 118–138 (QFAA…VAWG), 147–167 (ILAG…LVIF), 197–217 (QLLG…LMGL), 240–260 (AIVI…IGLF), 277–297 (LMLA…IILW), 303–323 (MEVS…LWLL), 348–368 (LAFA…ALSF), 391–411 (WPRI…GCII), 424–444 (VLGI…LVPG), 447–467 (FGWL…IIMI), 479–499 (MLLA…MLQA), 528–548 (GIVM…LTIL), 567–587 (IALL…IGPL), 607–627 (MPHI…ADWC), and 635–655 (FQIP…IYLL).

Belongs to the binding-protein-dependent transport system permease family. FecCD subfamily. The complex is composed of two ATP-binding proteins (FhuC), a transmembrane protein (FhuB) and a solute-binding protein (FhuD). FhuB interacts with FhuC. FhuB interacts with FhuD. FhuB binds substrate-loaded FhuD more strongly than FhuD alone.

It is found in the cell inner membrane. Its function is as follows. Part of the ABC transporter complex FhuCDB involved in iron(3+)-hydroxamate import. Responsible for the translocation of the substrate across the membrane. The protein is Iron(3+)-hydroxamate import system permease protein FhuB (fhuB) of Escherichia coli (strain K12).